The primary structure comprises 820 residues: Phenylalanine--tRNA ligase beta subunit (820 aa).

The tRNA-binding domain occupies 42–154 (KGGLEGLVIG…EDAVPGTLAK (113 aa)). One can recognise a B5 domain in the interval 413-489 (AQDFIVELTY…RIYGYNNVEI (77 aa)). Mg(2+) contacts are provided by D467, D473, E476, and D477. In terms of domain architecture, FDX-ACB spans 727–820 (SKFPAVKRDL…LEDKLGAKLR (94 aa)).

This sequence belongs to the phenylalanyl-tRNA synthetase beta subunit family. Type 1 subfamily. In terms of assembly, tetramer of two alpha and two beta subunits. Mg(2+) is required as a cofactor.

Its subcellular location is the cytoplasm. It catalyses the reaction tRNA(Phe) + L-phenylalanine + ATP = L-phenylalanyl-tRNA(Phe) + AMP + diphosphate + H(+). This Bacteroides fragilis (strain YCH46) protein is Phenylalanine--tRNA ligase beta subunit.